The following is a 142-amino-acid chain: Immunoglobulin omega chain (142 aa).

Residues 1 to 19 form the signal peptide; it reads MAWTSVLLMLLAHLTGCGP. Residues 20 to 41 are framework-1; the sequence is QPMVHQPPSASSSLGATIRLSC. Cys-41 and Cys-115 form a disulfide bridge. The interval 42-56 is complementarity-determining-1; that stretch reads TLSNDHNIGIYSIYW. The tract at residues 57 to 70 is framework-2; the sequence is YQQRPGHPPRFLLR. The complementarity-determining-2 stretch occupies residues 71 to 81; sequence YFSHSDKHQGP. Residues 82–115 are framework-3; that stretch reads DIPPRFSGSKDTARNLGYLSISELQPEDEAVYYC.

Belongs to the immunoglobulin superfamily. In terms of tissue distribution, only expressed by pre-B-cells.

Its function is as follows. Associates with the Ig-mu chain to form a molecular complex that is expressed on the surface of pre-B-cells. This complex presumably regulates Ig gene rearrangements in the early steps of B-cell differentiation. The polypeptide is Immunoglobulin omega chain (Mus musculus (Mouse)).